We begin with the raw amino-acid sequence, 219 residues long: Protein-L-isoaspartate O-methyltransferase 2 (219 aa).

Ser66 is an active-site residue.

Belongs to the methyltransferase superfamily. L-isoaspartyl/D-aspartyl protein methyltransferase family.

The protein resides in the cytoplasm. It carries out the reaction [protein]-L-isoaspartate + S-adenosyl-L-methionine = [protein]-L-isoaspartate alpha-methyl ester + S-adenosyl-L-homocysteine. In terms of biological role, catalyzes the methyl esterification of L-isoaspartyl residues in peptides and proteins that result from spontaneous decomposition of normal L-aspartyl and L-asparaginyl residues. It plays a role in the repair and/or degradation of damaged proteins. This is Protein-L-isoaspartate O-methyltransferase 2 from Marinobacter nauticus (strain ATCC 700491 / DSM 11845 / VT8) (Marinobacter aquaeolei).